A 143-amino-acid chain; its full sequence is Flagellar assembly factor FliW (143 aa).

The protein belongs to the FliW family. Interacts with translational regulator CsrA and flagellin(s).

Its subcellular location is the cytoplasm. Its function is as follows. Acts as an anti-CsrA protein, binds CsrA and prevents it from repressing translation of its target genes, one of which is flagellin. Binds to flagellin and participates in the assembly of the flagellum. This chain is Flagellar assembly factor FliW, found in Bacillus velezensis (strain DSM 23117 / BGSC 10A6 / LMG 26770 / FZB42) (Bacillus amyloliquefaciens subsp. plantarum).